Reading from the N-terminus, the 181-residue chain is MRVVLLGPPGAGKGTQAQKLAEKLGIPQISTGELFRKNIQDGTKLGIEAKRYLDAGDLVPSDLTNQLVDDRLDQPDTAAGFILDGYPRSVEQAKALHEMLRRRDTDIDAVLEFRVSQDELLQRLKGRGRADDTDEVILNRMKVYRDETAPLLEFYDTEVKTVDAIGTLDEVFARALQALGK.

An ATP-binding site is contributed by 10–15; it reads GAGKGT. Positions 30–59 are NMP; the sequence is STGELFRKNIQDGTKLGIEAKRYLDAGDLV. Residues T31, R36, 57 to 59, 85 to 88, and Q92 each bind AMP; these read DLV and GYPR. Positions 126-132 are LID; sequence GRGRADD. Residue R127 coordinates ATP. AMP contacts are provided by R129 and R140. Residue G166 participates in ATP binding.

It belongs to the adenylate kinase family. In terms of assembly, monomer.

Its subcellular location is the cytoplasm. The enzyme catalyses AMP + ATP = 2 ADP. Its pathway is purine metabolism; AMP biosynthesis via salvage pathway; AMP from ADP: step 1/1. In terms of biological role, catalyzes the reversible transfer of the terminal phosphate group between ATP and AMP. Plays an important role in cellular energy homeostasis and in adenine nucleotide metabolism. This is Adenylate kinase from Mycobacterium marinum (strain ATCC BAA-535 / M).